The sequence spans 532 residues: Berberine bridge enzyme-like 18 (532 aa).

An N-terminal signal peptide occupies residues Met-1 to Ala-29. Asn-30, Asn-33, Asn-46, Asn-59, Asn-147, Asn-169, and Asn-262 each carry an N-linked (GlcNAc...) asparagine glycan. Residues Cys-40 and Cys-102 are joined by a disulfide bond. The FAD-binding PCMH-type domain maps to Asp-80–Val-254. Positions His-117–Cys-179 form a cross-link, 6-(S-cysteinyl)-8alpha-(pros-histidyl)-FAD (His-Cys).

Belongs to the oxygen-dependent FAD-linked oxidoreductase family. It depends on FAD as a cofactor. Post-translationally, the FAD cofactor is bound via a bicovalent 6-S-cysteinyl, 8alpha-N1-histidyl FAD linkage.

The protein resides in the secreted. It localises to the cell wall. The chain is Berberine bridge enzyme-like 18 from Arabidopsis thaliana (Mouse-ear cress).